We begin with the raw amino-acid sequence, 309 residues long: Mitochondrial glycine transporter (309 aa).

3 Solcar repeats span residues 2–94, 124–207, and 219–304; these read SNVG…LRAL, LTSQ…IKHE, and QATL…GLML. Transmembrane regions (helical) follow at residues 8-33, 69-95, 130-155, 182-205, 223-249, and 279-297; these read LLSG…TRLQ, GTTP…RALM, LIAG…ARFE, GFLA…EGIK, IHGL…KTKI, and GASL…GWAV.

This sequence belongs to the mitochondrial carrier (TC 2.A.29) family. SLC25A38 subfamily.

The protein localises to the mitochondrion inner membrane. It carries out the reaction glycine(in) = glycine(out). In terms of biological role, mitochondrial glycine transporter that imports glycine into the mitochondrial matrix. Plays an important role in providing glycine for the first enzymatic step in heme biosynthesis, the condensation of glycine with succinyl-CoA to produce 5-aminolevulinate (ALA) in the mitochondrial matrix. The protein is Mitochondrial glycine transporter of Laccaria bicolor (strain S238N-H82 / ATCC MYA-4686) (Bicoloured deceiver).